Consider the following 202-residue polypeptide: Nucleoside triphosphate pyrophosphatase (202 aa).

Asp-79 functions as the Proton acceptor in the catalytic mechanism.

The protein belongs to the Maf family. Requires a divalent metal cation as cofactor.

Its subcellular location is the cytoplasm. It catalyses the reaction a ribonucleoside 5'-triphosphate + H2O = a ribonucleoside 5'-phosphate + diphosphate + H(+). The catalysed reaction is a 2'-deoxyribonucleoside 5'-triphosphate + H2O = a 2'-deoxyribonucleoside 5'-phosphate + diphosphate + H(+). In terms of biological role, nucleoside triphosphate pyrophosphatase. May have a dual role in cell division arrest and in preventing the incorporation of modified nucleotides into cellular nucleic acids. This is Nucleoside triphosphate pyrophosphatase from Rhodopseudomonas palustris (strain BisB5).